The primary structure comprises 136 residues: Nucleoside diphosphate kinase (136 aa).

ATP-binding residues include lysine 10, phenylalanine 58, arginine 86, threonine 92, arginine 104, and asparagine 114. The active-site Pros-phosphohistidine intermediate is the histidine 117.

Belongs to the NDK family. Homotetramer. Mg(2+) serves as cofactor.

The protein resides in the cytoplasm. The enzyme catalyses a 2'-deoxyribonucleoside 5'-diphosphate + ATP = a 2'-deoxyribonucleoside 5'-triphosphate + ADP. The catalysed reaction is a ribonucleoside 5'-diphosphate + ATP = a ribonucleoside 5'-triphosphate + ADP. Functionally, major role in the synthesis of nucleoside triphosphates other than ATP. The ATP gamma phosphate is transferred to the NDP beta phosphate via a ping-pong mechanism, using a phosphorylated active-site intermediate. The sequence is that of Nucleoside diphosphate kinase from Mycobacterium leprae (strain TN).